The following is a 328-amino-acid chain: Formimidoylglutamase (328 aa).

Residues His133, Asp159, His161, Asp163, Asp253, and Asp255 each contribute to the Mn(2+) site.

The protein belongs to the arginase family. It depends on Mn(2+) as a cofactor.

The catalysed reaction is N-formimidoyl-L-glutamate + H2O = formamide + L-glutamate. The protein operates within amino-acid degradation; L-histidine degradation into L-glutamate; L-glutamate from N-formimidoyl-L-glutamate (hydrolase route): step 1/1. Its function is as follows. Catalyzes the conversion of N-formimidoyl-L-glutamate to L-glutamate and formamide. This Streptococcus pyogenes serotype M1 protein is Formimidoylglutamase.